The primary structure comprises 214 residues: Histidine biosynthesis bifunctional protein HisIE (214 aa).

Positions 1–114 are phosphoribosyl-AMP cyclohydrolase; it reads MDLSAVRFDE…LEGEKDLGFV (114 aa). The tract at residues 115–214 is phosphoribosyl-ATP pyrophosphohydrolase; the sequence is VGQVYATIKE…RSPYDGSHGN (100 aa).

The protein in the N-terminal section; belongs to the PRA-CH family. This sequence in the C-terminal section; belongs to the PRA-PH family.

The protein resides in the cytoplasm. The enzyme catalyses 1-(5-phospho-beta-D-ribosyl)-ATP + H2O = 1-(5-phospho-beta-D-ribosyl)-5'-AMP + diphosphate + H(+). The catalysed reaction is 1-(5-phospho-beta-D-ribosyl)-5'-AMP + H2O = 1-(5-phospho-beta-D-ribosyl)-5-[(5-phospho-beta-D-ribosylamino)methylideneamino]imidazole-4-carboxamide. The protein operates within amino-acid biosynthesis; L-histidine biosynthesis; L-histidine from 5-phospho-alpha-D-ribose 1-diphosphate: step 2/9. Its pathway is amino-acid biosynthesis; L-histidine biosynthesis; L-histidine from 5-phospho-alpha-D-ribose 1-diphosphate: step 3/9. In Thermus thermophilus (strain ATCC BAA-163 / DSM 7039 / HB27), this protein is Histidine biosynthesis bifunctional protein HisIE.